The primary structure comprises 716 residues: MNYGAADERWANPPQPVAAAEHGPSFDHSMVSEEYEHDKKKNPAQKEGISFSQALLASGHEKSDGKIKLTARSFMEVGGYAVFLIVLVYVAFAQNSIQSYYYSKVMSDLFVASTGASGAPAFGSCTSMDNIWDWLSQVLIPGIYWTETSNSTDNENMIYYENRLLGEPRIRMLKVTNDSCTVMKSFQREIKECFANYEEKLEDKTMVGDGSVDAFIYATAKELENLKTVGTIASYGGGGFVQRLPVAGSTEAQSAIATLKANRWIDRGSRAIIVDFALYNANINLFCVVKLLFELPASGGVITTPKLMTYDLLTYQTSGGTRMMIFEGIFCGFILYFIFEELFAIGRHRLHYLTQFWNLVDVVLLGFSVATIILSVNRTKTGVNRVNSVIENGLTNAPFDDVTSSENSYLNIKACVVFVAWVKVFKFISVNKTMSQLSSTLTRSAKDIGGFAVMFAVFFFAFAQFGYLCFGTQIADYSNLYNSAFALLRLILGDFNFSALESCNRFFGPAFFIAYVFFVSFILLNMFLAIINDSYVEVKAELARKKDGEGILDWFMNKVRGLTKRGKRPDAPGEDATYEDYKLMLYRAGYAEKDINEAFTRFNVTSMTEHVPEKVAEDIADEVARMTEQKRNYMENHRDYANLNRRVDQMQESVFSIVDRIEGVNATLQTIEKQRVQQQDGGNLMDLSALLTNQVRNRESAARRPTITSIADKKEE.

2 stretches are compositionally biased toward basic and acidic residues: residues 1–10 and 30–41; these read MNYGAADERW and MVSEEYEHDKKK. Residues 1–44 form a disordered region; the sequence is MNYGAADERWANPPQPVAAAEHGPSFDHSMVSEEYEHDKKKNPA. At 1 to 72 the chain is on the cytoplasmic side; sequence MNYGAADERW…SDGKIKLTAR (72 aa). Residues 73 to 93 traverse the membrane as a helical segment; that stretch reads SFMEVGGYAVFLIVLVYVAFA. The Extracellular segment spans residues 94–324; sequence QNSIQSYYYS…YQTSGGTRMM (231 aa). 2 N-linked (GlcNAc...) asparagine glycosylation sites follow: Asn150 and Asn177. Cys180 and Cys193 are disulfide-bonded. A helical transmembrane segment spans residues 325–345; the sequence is IFEGIFCGFILYFIFEELFAI. The Cytoplasmic segment spans residues 346 to 355; it reads GRHRLHYLTQ. A helical transmembrane segment spans residues 356–376; that stretch reads FWNLVDVVLLGFSVATIILSV. Residue Asn377 is glycosylated (N-linked (GlcNAc...) asparagine). At 377–409 the chain is on the extracellular side; the sequence is NRTKTGVNRVNSVIENGLTNAPFDDVTSSENSY. Residues 410–430 traverse the membrane as a helical segment; it reads LNIKACVVFVAWVKVFKFISV. Topologically, residues 431 to 447 are cytoplasmic; that stretch reads NKTMSQLSSTLTRSAKD. The chain crosses the membrane as a helical span at residues 448 to 468; it reads IGGFAVMFAVFFFAFAQFGYL. At 469–482 the chain is on the extracellular side; that stretch reads CFGTQIADYSNLYN. Positions 483–497 form an intramembrane region, pore-forming; the sequence is SAFALLRLILGDFNF. Over 498 to 510 the chain is Extracellular; it reads SALESCNRFFGPA. A helical membrane pass occupies residues 511–531; sequence FFIAYVFFVSFILLNMFLAII. Topologically, residues 532 to 716 are cytoplasmic; it reads NDSYVEVKAE…ITSIADKKEE (185 aa). Ser534 is modified (phosphoserine; by CK2). Residues 613–680 are a coiled coil; sequence EKVAEDIADE…IEKQRVQQQD (68 aa). Positions 696–716 are disordered; the sequence is RNRESAARRPTITSIADKKEE.

Belongs to the polycystin family. Post-translationally, phosphorylated. CK2 (kin-3 and kin-10) and calcineurin act antagonistically to regulate the phosphorylation state. Exclusively expressed in a subset of 3 categories of adult male sensory neurons: ray neurons, hook neurons and head cephalic (CEM) neurons. Expressed in the male tail.

The protein localises to the cell membrane. The protein resides in the cell projection. It localises to the cilium membrane. Its subcellular location is the cilium. It is found in the axon. The protein localises to the dendrite. The protein resides in the perikaryon. It localises to the endoplasmic reticulum membrane. Functionally, functions as a calcium permeable cation channel. Required for 2 aspects of male mating behavior: response to hermaphrodite contact and vulva location. Acts in the same pathway as lov-1 and atp-2 in response behavior. This is Polycystin-2 from Caenorhabditis elegans.